A 475-amino-acid polypeptide reads, in one-letter code: Ribulose bisphosphate carboxylase large chain (475 aa).

Residues 1–2 (MS) constitute a propeptide that is removed on maturation. Position 3 is an N-acetylproline (proline 3). At lysine 14 the chain carries N6,N6,N6-trimethyllysine. Residues asparagine 123 and threonine 173 each coordinate substrate. The Proton acceptor role is filled by lysine 175. Lysine 177 provides a ligand contact to substrate. Residues lysine 201, aspartate 203, and glutamate 204 each coordinate Mg(2+). An N6-carboxylysine modification is found at lysine 201. Histidine 294 functions as the Proton acceptor in the catalytic mechanism. Arginine 295, histidine 327, and serine 379 together coordinate substrate.

Belongs to the RuBisCO large chain family. Type I subfamily. As to quaternary structure, heterohexadecamer of 8 large chains and 8 small chains; disulfide-linked. The disulfide link is formed within the large subunit homodimers. Mg(2+) serves as cofactor. In terms of processing, the disulfide bond which can form in the large chain dimeric partners within the hexadecamer appears to be associated with oxidative stress and protein turnover.

It localises to the plastid. The protein localises to the chloroplast. The catalysed reaction is 2 (2R)-3-phosphoglycerate + 2 H(+) = D-ribulose 1,5-bisphosphate + CO2 + H2O. It catalyses the reaction D-ribulose 1,5-bisphosphate + O2 = 2-phosphoglycolate + (2R)-3-phosphoglycerate + 2 H(+). Functionally, ruBisCO catalyzes two reactions: the carboxylation of D-ribulose 1,5-bisphosphate, the primary event in carbon dioxide fixation, as well as the oxidative fragmentation of the pentose substrate in the photorespiration process. Both reactions occur simultaneously and in competition at the same active site. In Plumbago auriculata (Cape leadwort), this protein is Ribulose bisphosphate carboxylase large chain.